A 223-amino-acid polypeptide reads, in one-letter code: Agamous-like MADS-box protein AGL11 (223 aa).

In terms of domain architecture, MADS-box spans 1-61 (MGRGKIEIKR…GRVYEYSNNN (61 aa)). One can recognise a K-box domain in the interval 87 to 177 (AQYYQQESAK…RTKIAEVERL (91 aa)).

The protein localises to the nucleus. Its function is as follows. Probable transcription factor involved in seed development. In Vitis vinifera (Grape), this protein is Agamous-like MADS-box protein AGL11.